The chain runs to 446 residues: Tubulin beta-6 chain (446 aa).

The MREI motif signature appears at 1 to 4 (MREI). GTP contacts are provided by Gln11, Glu69, Ser138, Gly142, Thr143, Gly144, Asn204, and Asn226. Glu69 serves as a coordination point for Mg(2+). Positions 419–446 (VSEYQQYQDATADVEEYEEAEASPEKET) are disordered. Residues 430 to 440 (ADVEEYEEAEA) are compositionally biased toward acidic residues.

The protein belongs to the tubulin family. In terms of assembly, dimer of alpha and beta chains. A typical microtubule is a hollow water-filled tube with an outer diameter of 25 nm and an inner diameter of 15 nM. Alpha-beta heterodimers associate head-to-tail to form protofilaments running lengthwise along the microtubule wall with the beta-tubulin subunit facing the microtubule plus end conferring a structural polarity. Microtubules usually have 13 protofilaments but different protofilament numbers can be found in some organisms and specialized cells. Mg(2+) serves as cofactor. Some glutamate residues at the C-terminus are polyglycylated, resulting in polyglycine chains on the gamma-carboxyl group. Glycylation is mainly limited to tubulin incorporated into axonemes (cilia and flagella) whereas glutamylation is prevalent in neuronal cells, centrioles, axonemes, and the mitotic spindle. Both modifications can coexist on the same protein on adjacent residues, and lowering polyglycylation levels increases polyglutamylation, and reciprocally. The precise function of polyglycylation is still unclear. In terms of processing, some glutamate residues at the C-terminus are polyglutamylated, resulting in polyglutamate chains on the gamma-carboxyl group. Polyglutamylation plays a key role in microtubule severing by spastin (SPAST). SPAST preferentially recognizes and acts on microtubules decorated with short polyglutamate tails: severing activity by SPAST increases as the number of glutamates per tubulin rises from one to eight, but decreases beyond this glutamylation threshold. In terms of tissue distribution, highly expressed in bone marrow.

Its subcellular location is the cytoplasm. It localises to the cytoskeleton. Its function is as follows. Tubulin is the major constituent of microtubules, a cylinder consisting of laterally associated linear protofilaments composed of alpha- and beta-tubulin heterodimers. Microtubules grow by the addition of GTP-tubulin dimers to the microtubule end, where a stabilizing cap forms. Below the cap, tubulin dimers are in GDP-bound state, owing to GTPase activity of alpha-tubulin. The sequence is that of Tubulin beta-6 chain from Gallus gallus (Chicken).